A 431-amino-acid chain; its full sequence is Probable sodium/metabolite cotransporter BASS3, chloroplastic (431 aa).

The transit peptide at 1–70 (MTLIASLSLP…RRNSGLVPVV (70 aa)) directs the protein to the chloroplast. 9 consecutive transmembrane segments (helical) span residues 110–130 (FWSA…LSYP), 145–165 (LGGI…ALAF), 169–189 (VPLS…GVLV), 198–218 (TFYA…SSYA), 238–258 (IASV…VVPV), 261–281 (VAMS…GLVL), 288–308 (VVTL…SLCI), 325–345 (LGLI…GYWF), and 387–407 (VPAA…ASFW).

This sequence belongs to the bile acid:sodium symporter (BASS) (TC 2.A.28) family.

It is found in the membrane. It localises to the plastid. The protein localises to the chloroplast envelope. May function as sodium-coupled metabolite transporter across the chloroplast envelope. This is Probable sodium/metabolite cotransporter BASS3, chloroplastic (BASS3) from Arabidopsis thaliana (Mouse-ear cress).